A 44-amino-acid chain; its full sequence is Photosystem II reaction center protein K (44 aa).

Residues 1 to 7 constitute a propeptide that is removed on maturation; sequence METLLLS. A helical transmembrane segment spans residues 23–43; sequence LPIIPVFFLLLAFVWQAAIGF.

Belongs to the PsbK family. As to quaternary structure, PSII is composed of 1 copy each of membrane proteins PsbA, PsbB, PsbC, PsbD, PsbE, PsbF, PsbH, PsbI, PsbJ, PsbK, PsbL, PsbM, PsbT, PsbX, PsbY, PsbZ, Psb30/Ycf12, at least 3 peripheral proteins of the oxygen-evolving complex and a large number of cofactors. It forms dimeric complexes.

The protein resides in the plastid. The protein localises to the chloroplast thylakoid membrane. In terms of biological role, one of the components of the core complex of photosystem II (PSII). PSII is a light-driven water:plastoquinone oxidoreductase that uses light energy to abstract electrons from H(2)O, generating O(2) and a proton gradient subsequently used for ATP formation. It consists of a core antenna complex that captures photons, and an electron transfer chain that converts photonic excitation into a charge separation. The protein is Photosystem II reaction center protein K of Phaeodactylum tricornutum (strain CCAP 1055/1).